The following is a 686-amino-acid chain: Probable ferric reductase transmembrane component (686 aa).

7 consecutive transmembrane segments (helical) span residues 23–43 (LSGW…VPVV), 79–99 (TLWL…VGSA), 111–131 (VAAA…PLPY), 147–167 (VVVL…ATSG), 178–198 (WMGA…LPAV), 205–225 (TFYY…HVHS), and 256–276 (VTVV…ADLV). A Ferric oxidoreductase domain is found at 108-666 (LGRVAAAFMP…LAAGPQALVE (559 aa)). Residue 308 to 314 (HPFTVAS) participates in FAD binding. The helical transmembrane segment at 392 to 412 (LMVVGGSAISFGLPFLRILNF) threads the bilayer. 431 to 439 (ILSQFRSNF) is an NAD(+) binding site. N-linked (GlcNAc...) asparagine glycans are attached at residues asparagine 506 and asparagine 644.

FAD serves as cofactor.

Its subcellular location is the membrane. The enzyme catalyses 2 a Fe(II)-siderophore + NAD(+) + H(+) = 2 a Fe(III)-siderophore + NADH. Functionally, is required for the uptake of Fe(3+) ions. May participate in the transport of electrons from cytoplasm to an extracellular substrate (Fe(3+) ion) via FAD and heme intermediates. Involved in iron homeostasis. In Eremothecium gossypii (strain ATCC 10895 / CBS 109.51 / FGSC 9923 / NRRL Y-1056) (Yeast), this protein is Probable ferric reductase transmembrane component (FRE8).